The chain runs to 277 residues: Probable redox regulatory protein ML2435 (277 aa).

This sequence belongs to the Rv0495c family.

In terms of biological role, essential for maintaining intracellular redox homeostasis. This chain is Probable redox regulatory protein ML2435, found in Mycobacterium leprae (strain TN).